The following is a 405-amino-acid chain: Pulcherriminic acid synthase (405 aa).

Heme contacts are provided by Lys-62, Asn-229, Arg-285, and Cys-353.

This sequence belongs to the cytochrome P450 family. As to quaternary structure, homodimer. It depends on heme as a cofactor.

It catalyses the reaction cyclo(L-leucyl-L-leucyl) + 6 reduced [2Fe-2S]-[ferredoxin] + 3 O2 + 4 H(+) = pulcherriminic acid + 6 oxidized [2Fe-2S]-[ferredoxin] + 4 H2O. Functionally, involved in the biosynthesis of pulcherrimin, a red extracellular pigment. Catalyzes the oxidation of cyclo(L-Leu-L-Leu) (cLL) to yield pulcherriminic acid which forms pulcherrimin via a nonenzymic reaction with Fe(3+). Substrates with small alkyl groups (cAA, cLG, cLP) exhibit weaker binding to CYP134A1, but substrates with larger hydrophobic side chains bind in a similar regime to cLL. This Bacillus subtilis (strain 168) protein is Pulcherriminic acid synthase (cypX).